The chain runs to 359 residues: CCAAT/enhancer-binding protein alpha (359 aa).

The segment at 1–55 is disordered; that stretch reads MESADFYEVEPRPPMSSHLQSPPHAPSNAAFGFPRGAGPAPPPAPPAAPEPLGGI. The required to repress E2F1:TFDP1-mediated transcription, to inhibit cell cycle and to induce adipocyte differentiation stretch occupies residues 1-70; sequence MESADFYEVE…SIDISAYIDP (70 aa). Low complexity predominate over residues 29–38; the sequence is AAFGFPRGAG. Residues 39–49 are compositionally biased toward pro residues; it reads PAPPPAPPAAP. Residues 54 to 72 are required for interaction with TRIB1; the sequence is GICEHETSIDISAYIDPAA. Residues 126-200 are required to induce adipocyte differentiation; it reads PPGYGCAAAG…HASPAHLAAP (75 aa). At Lys-159 the chain carries N6-acetyllysine; alternate. Lys-159 is covalently cross-linked (Glycyl lysine isopeptide (Lys-Gly) (interchain with G-Cter in SUMO); alternate). Lys-159 is covalently cross-linked (Glycyl lysine isopeptide (Lys-Gly) (interchain with G-Cter in SUMO2); alternate). 2 disordered regions span residues 176–195 and 213–293; these read LFPY…ASPA and TMHL…RERN. The span at 179–191 shows a compositional bias: pro residues; the sequence is YQPPPPPPPPHPH. Positions 180–194 are required to functionally cooperate with SREBF1 in promoter activation; sequence QPPPPPPPPHPHASP. At Ser-193 the chain carries Phosphoserine. A compositionally biased stretch (pro residues) spans 220-232; the sequence is HPTPPPTPVPSPH. A phosphothreonine; by GSK3 mark is found at Thr-222 and Thr-226. Residue Ser-230 is modified to Phosphoserine; by GSK3. Residues 233-255 show a composition bias toward low complexity; it reads AAPALGAAGLPGPGSALKGLAGA. The segment at 240-359 is interaction with FOXO1; the sequence is AGLPGPGSAL…SLVKAMGNCA (120 aa). The span at 261–272 shows a compositional bias: gly residues; sequence TGGGGGGSGAGA. Over residues 277 to 293 the composition is skewed to basic and acidic residues; sequence KSVDKNSNEYRVRRERN. One can recognise a bZIP domain in the interval 283–346; it reads SNEYRVRRER…DTLRGIFRQL (64 aa). The DNA-binding element occupies 286 to 301; it reads YRVRRERNNIAVRKSR. The segment at 287–314 is basic motif; sequence RVRRERNNIAVRKSRDKAKQRNVETQQK. Positions 318-346 are leucine-zipper; sequence LTSDNDRLRKRVEQLSRELDTLRGIFRQL.

The protein belongs to the bZIP family. C/EBP subfamily. Binds DNA as a homodimer and as a heterodimer. Can form stable heterodimers with CEBPB, CEBPD, CEBPE and CEBPG. Interacts with PRDM16. Interacts with UBN1. Interacts with ZNF638; this interaction increases transcriptional activation. Interacts with the complex TFDP2:E2F1; the interaction prevents CEBPA binding to target gene promoters and represses its transcriptional activity. Interacts with RB1. Interacts (when phosphorylated at Ser-193) with CDK2, CDK4, E2F4 and SMARCA2. Interacts with SREBPF1. Interacts with FOXO1 (via the Fork-head domain); the interaction increases when FOXO1 is deacetylated. Interacts with SIX1. Interacts (via recognition sequence) with TRIB1. Interacts (via bZIP domain) with OVOL2 (via zinc-finger domains); the interaction inhibits the transcription factor activity of CEBPA and is required to repress adipogenesis. As to quaternary structure, interacts with TAF1A and UBTF. In terms of assembly, interacts with TAF1A and UBTF. Interacts with NPM1. In terms of processing, sumoylated, sumoylation blocks the inhibitory effect on cell proliferation by disrupting the interaction with SMARCA2. Post-translationally, phosphorylation at Ser-193 is required for interaction with CDK2, CDK4 and SWI/SNF complex leading to cell cycle inhibition. Dephosphorylated at Ser-193 by protein phosphatase 2A (PP2A) through PI3K/AKT signaling pathway regulation. Phosphorylation at Thr-222 and Thr-226 by GSK3 is constitutive in adipose tissue and lung. In liver, both Thr-222 and Thr-226 are phosphorylated only during feeding but not during fasting. Phosphorylation of the GSK3 consensus sites selectively decreases transactivation activity on IRE-controlled promoters. Ubiquitinated by COP1 upon interaction with TRIB1. As to expression, isoform 2 and isoform 3 are expressed in adipose tissue and liver (at protein level).

Its subcellular location is the nucleus. It is found in the nucleolus. Transcription factor that coordinates proliferation arrest and the differentiation of myeloid progenitors, adipocytes, hepatocytes, and cells of the lung and the placenta. Binds directly to the consensus DNA sequence 5'-T[TG]NNGNAA[TG]-3' acting as an activator on distinct target genes. During early embryogenesis, plays essential and redundant functions with CEBPB. Essential for the transition from common myeloid progenitors (CMP) to granulocyte/monocyte progenitors (GMP). Critical for the proper development of the liver and the lung. Necessary for terminal adipocyte differentiation, is required for postnatal maintenance of systemic energy homeostasis and lipid storage. To regulate these different processes at the proper moment and tissue, interplays with other transcription factors and modulators. Down-regulates the expression of genes that maintain cells in an undifferentiated and proliferative state through E2F1 repression, which is critical for its ability to induce adipocyte and granulocyte terminal differentiation. Reciprocally E2F1 blocks adipocyte differentiation by binding to specific promoters and repressing CEBPA binding to its target gene promoters. Proliferation arrest also depends on a functional binding to SWI/SNF complex. In liver, regulates gluconeogenesis and lipogenesis through different mechanisms. To regulate gluconeogenesis, functionally cooperates with FOXO1 binding to IRE-controlled promoters and regulating the expression of target genes such as PCK1 or G6PC1. To modulate lipogenesis, interacts and transcriptionally synergizes with SREBF1 in promoter activation of specific lipogenic target genes such as ACAS2. In adipose tissue, seems to act as FOXO1 coactivator accessing to ADIPOQ promoter through FOXO1 binding sites. In terms of biological role, can act as dominant-negative. Binds DNA and have transctivation activity, even if much less efficiently than isoform 2. Does not inhibit cell proliferation. Its function is as follows. Directly and specifically enhances ribosomal DNA transcription interacting with RNA polymerase I-specific cofactors and inducing histone acetylation. The sequence is that of CCAAT/enhancer-binding protein alpha from Mus musculus (Mouse).